The chain runs to 132 residues: ATP synthase epsilon chain (132 aa).

It belongs to the ATPase epsilon chain family. As to quaternary structure, F-type ATPases have 2 components, CF(1) - the catalytic core - and CF(0) - the membrane proton channel. CF(1) has five subunits: alpha(3), beta(3), gamma(1), delta(1), epsilon(1). CF(0) has three main subunits: a, b and c.

The protein localises to the cell inner membrane. Functionally, produces ATP from ADP in the presence of a proton gradient across the membrane. In Anaeromyxobacter sp. (strain K), this protein is ATP synthase epsilon chain.